Here is a 206-residue protein sequence, read N- to C-terminus: MRLSEDENYFEIEEKLLNEGYRFICGVDEAGRGPLAGPVFAAAVVMDRKRIIEGVRDSKKLTPKKREKLFEEIIKESIAYSVAMVDSKVIDEININNATFLAMKNAIENLKIEPDIVLVDGYKIPNLGFNQRAIIKGDRKSYSIACASILAKVSRDRYIVEISSKYPLYKFEKHKGYGTKEHIEILQKYGPCEIHRISFLKNILSL.

The RNase H type-2 domain occupies 22 to 206 (RFICGVDEAG…ISFLKNILSL (185 aa)). A divalent metal cation contacts are provided by Asp28, Glu29, and Asp120.

The protein belongs to the RNase HII family. It depends on Mn(2+) as a cofactor. Requires Mg(2+) as cofactor.

It is found in the cytoplasm. It carries out the reaction Endonucleolytic cleavage to 5'-phosphomonoester.. In terms of biological role, endonuclease that specifically degrades the RNA of RNA-DNA hybrids. The sequence is that of Ribonuclease HII from Caldicellulosiruptor bescii (strain ATCC BAA-1888 / DSM 6725 / KCTC 15123 / Z-1320) (Anaerocellum thermophilum).